The chain runs to 429 residues: MFVDHVKIYVKGGDGGDGMVAFRREKYVPNGGPAGGDGGHGGNVVFEVEEGLRTLMDFRYKRHFKAPRGEHGMSKGMHGKNAEDLIVKVPPGTVVMNEETNAVIADLVEHGQRAVIAKAGRGGRGNSRFATPANPAPELSEKGEPGQELNVILELKVLADVGLVGFPSVGKSTLLSVVSAAKPKIGAYHFTTIVPNLGMIETDDHRSFAMADLPGLIEGAHEGVGLGHQFLRHIERTRVIVHVIDMSGMEGRDPYEDYLTINEELKQYNLRLTERPQIIVANKMDMPDAEENLTAFRQKVGEDVQIFPISAVSRQGLKELLFAIADLLEVTPEFPLYDEVEEQSDATVMYKHEAKGEDFEITRDDDGTFIISGYAIERLFKMTDFSREDGIRRFARQLRAMGVDEALRERGAQDGDTVRLQEFEFEFVD.

One can recognise an Obg domain in the interval 1–158 (MFVDHVKIYV…LNVILELKVL (158 aa)). Positions 119–143 (AGRGGRGNSRFATPANPAPELSEKG) are disordered. In terms of domain architecture, OBG-type G spans 159-329 (ADVGLVGFPS…LLFAIADLLE (171 aa)). GTP contacts are provided by residues 165–172 (GFPSVGKS), 190–194 (FTTIV), 212–215 (DLPG), 282–285 (NKMD), and 310–312 (SAV). Residues Ser172 and Thr192 each coordinate Mg(2+). In terms of domain architecture, OCT spans 351–429 (KHEAKGEDFE…LQEFEFEFVD (79 aa)).

Belongs to the TRAFAC class OBG-HflX-like GTPase superfamily. OBG GTPase family. Monomer. Mg(2+) is required as a cofactor.

The protein resides in the cytoplasm. Its function is as follows. An essential GTPase which binds GTP, GDP and possibly (p)ppGpp with moderate affinity, with high nucleotide exchange rates and a fairly low GTP hydrolysis rate. Plays a role in control of the cell cycle, stress response, ribosome biogenesis and in those bacteria that undergo differentiation, in morphogenesis control. The polypeptide is GTPase Obg (Lysinibacillus sphaericus (strain C3-41)).